The chain runs to 728 residues: 1,4-alpha-glucan branching enzyme GlgB (728 aa).

Aspartate 405 serves as the catalytic Nucleophile. Residue glutamate 458 is the Proton donor of the active site.

It belongs to the glycosyl hydrolase 13 family. GlgB subfamily. As to quaternary structure, monomer.

The catalysed reaction is Transfers a segment of a (1-&gt;4)-alpha-D-glucan chain to a primary hydroxy group in a similar glucan chain.. The protein operates within glycan biosynthesis; glycogen biosynthesis. Functionally, catalyzes the formation of the alpha-1,6-glucosidic linkages in glycogen by scission of a 1,4-alpha-linked oligosaccharide from growing alpha-1,4-glucan chains and the subsequent attachment of the oligosaccharide to the alpha-1,6 position. The polypeptide is 1,4-alpha-glucan branching enzyme GlgB (Escherichia coli O6:K15:H31 (strain 536 / UPEC)).